Reading from the N-terminus, the 39-residue chain is Potassium channel toxin alpha-KTx 2.16 (39 aa).

3 disulfide bridges follow: Cys-7–Cys-29, Cys-13–Cys-34, and Cys-17–Cys-36. Ile-39 is subject to Isoleucine amide.

This sequence belongs to the short scorpion toxin superfamily. Potassium channel inhibitor family. Alpha-KTx 02 subfamily. In terms of tissue distribution, expressed by the venom gland.

The protein resides in the secreted. Functionally, blocks human voltage-gated potassium channels Kv1.2/KCNA2 (IC(50)=0.7 nM), Kv1.3/KCNA3 (IC(50)=26.2 nM) and blocks intermediate conductance calcium-activated potassium channel KCa3.1/KCNN4 (IC(50)=56 nM). In Centruroides tecomanus (Scorpion), this protein is Potassium channel toxin alpha-KTx 2.16.